A 132-amino-acid chain; its full sequence is Putative RNase AF_0947 (132 aa).

Active-site residues include Arg91 and His96. Residues Arg91–Tyr98 carry the RX(4)HXY motif motif. An O-di-AMP-tyrosine modification is found at Tyr98.

Belongs to the HepT RNase toxin family. Homodimer, probably forms a complex with cognate antitoxin AF_0948. Post-translationally, modified by cognate antitoxin AF_0948; probably at least 2 successive AMPylation events occur on Tyr-98.

Functionally, probable toxic component of a putative type VII toxin-antitoxin (TA) system, probably an RNase. Probably neutralized by cognate antitoxin AF_0948. Neutralization may be due to AMPylation by AF_0948. In Archaeoglobus fulgidus (strain ATCC 49558 / DSM 4304 / JCM 9628 / NBRC 100126 / VC-16), this protein is Putative RNase AF_0947.